We begin with the raw amino-acid sequence, 533 residues long: Retinoid isomerohydrolase (533 aa).

Ser-2 bears the N-acetylserine mark. 2 positions are modified to phosphothreonine: Thr-101 and Thr-105. Cys-112 carries S-palmitoyl cysteine; in membrane form lipidation. The residue at position 113 (Lys-113) is an N6-acetyllysine. Ser-117 carries the post-translational modification Phosphoserine. Fe cation is bound at residue His-180. Cys-231 carries the S-palmitoyl cysteine; in membrane form lipid modification. Positions 241 and 313 each coordinate Fe cation. S-palmitoyl cysteine; in membrane form attachment occurs at residues Cys-329 and Cys-330. Residue His-527 coordinates Fe cation.

Belongs to the carotenoid oxygenase family. As to quaternary structure, interacts with MYO7A; this mediates light-dependent intracellular transport of RPE65. Requires Fe(2+) as cofactor. Palmitoylation by LRAT regulates ligand binding specificity; the palmitoylated form (membrane form) specifically binds all-trans-retinyl-palmitate, while the soluble unpalmitoylated form binds all-trans-retinol (vitamin A). Retinal pigment epithelium specific.

It localises to the cytoplasm. It is found in the cell membrane. Its subcellular location is the microsome membrane. The enzyme catalyses an all-trans-retinyl ester + H2O = 11-cis-retinol + a fatty acid + H(+). The catalysed reaction is lutein = (3R,3'S)-zeaxanthin. It catalyses the reaction all-trans-retinyl hexadecanoate + H2O = 11-cis-retinol + hexadecanoate + H(+). In terms of biological role, critical isomerohydrolase in the retinoid cycle involved in regeneration of 11-cis-retinal, the chromophore of rod and cone opsins. Catalyzes the cleavage and isomerization of all-trans-retinyl fatty acid esters to 11-cis-retinol which is further oxidized by 11-cis retinol dehydrogenase to 11-cis-retinal for use as visual chromophore. Essential for the production of 11-cis retinal for both rod and cone photoreceptors. Also capable of catalyzing the isomerization of lutein to meso-zeaxanthin an eye-specific carotenoid. The soluble form binds vitamin A (all-trans-retinol), making it available for LRAT processing to all-trans-retinyl ester. The membrane form, palmitoylated by LRAT, binds all-trans-retinyl esters, making them available for IMH (isomerohydrolase) processing to all-cis-retinol. The soluble form is regenerated by transferring its palmitoyl groups onto 11-cis-retinol, a reaction catalyzed by LRAT. This is Retinoid isomerohydrolase (RPE65) from Canis lupus familiaris (Dog).